A 384-amino-acid chain; its full sequence is Beta-glucuronosyltransferase GlcAT14C (384 aa).

Over 1–11 (MKRSHISSPRS) the chain is Cytoplasmic. A signal-anchor for type II membrane protein transmembrane segment spans residues 12–34 (YSRPAISIFGVFLLFLLVLTLSS). Residues 35–384 (RKPSDSSSGL…HENFRAKQCK (350 aa)) lie on the Lumenal side of the membrane. Asparagine 156, asparagine 285, and asparagine 306 each carry an N-linked (GlcNAc...) asparagine glycan.

The protein belongs to the glycosyltransferase 14 family.

It is found in the golgi apparatus membrane. Beta-glucuronosyltransferase involved in the biosynthesis of type II arabinogalactan (AG). Modifies both the beta-1,6-linked galactan and beta-1,3-linked galactan present in type II AG. This chain is Beta-glucuronosyltransferase GlcAT14C, found in Arabidopsis thaliana (Mouse-ear cress).